The primary structure comprises 235 residues: Type II secretion system protein N (235 aa).

Topologically, residues M1 to A34 are cytoplasmic. Residues L35 to W55 traverse the membrane as a helical; Signal-anchor for type II membrane protein segment. At L56 to D235 the chain is on the periplasmic side. Positions D205 to D235 are disordered. Residues E226–D235 are compositionally biased toward low complexity.

It is found in the cell inner membrane. In terms of biological role, involved in a type II secretion system (T2SS, formerly general secretion pathway, GSP) for the export of proteins. Required for the translocation of a variety of enzymes across the outer membrane. The chain is Type II secretion system protein N (xcpP) from Pseudomonas aeruginosa (strain ATCC 15692 / DSM 22644 / CIP 104116 / JCM 14847 / LMG 12228 / 1C / PRS 101 / PAO1).